A 120-amino-acid polypeptide reads, in one-letter code: Large ribosomal subunit protein bL19 (120 aa).

Belongs to the bacterial ribosomal protein bL19 family.

This protein is located at the 30S-50S ribosomal subunit interface and may play a role in the structure and function of the aminoacyl-tRNA binding site. The sequence is that of Large ribosomal subunit protein bL19 from Synechococcus sp. (strain ATCC 27144 / PCC 6301 / SAUG 1402/1) (Anacystis nidulans).